Here is a 579-residue protein sequence, read N- to C-terminus: Carotenoid-cleaving dioxygenase, mitochondrial (579 aa).

Fe cation contacts are provided by H226, H286, H357, and H573.

It belongs to the carotenoid oxygenase family. Fe(2+) is required as a cofactor. As to expression, highly expressed in retinal pigment epithelium. Also expressed in stomach, small intestine, liver, testis, kidney, adrenal gland, pancreas, heart, skeletal muscle and prostate (at protein level).

It localises to the mitochondrion. It carries out the reaction all-trans-beta-carotene + O2 = beta-ionone + all-trans-10'-apo-beta-carotenal. The enzyme catalyses 5-cis-lycopene + O2 = 5-cis-10'-apo-lycopenal + (3E,5E)-6,10-dimethylundeca-3,5,9-trien-2-one. The catalysed reaction is 13-cis-lycopene + O2 = 13-cis-10'-apo-lycopenal + (3E,5E)-6,10-dimethylundeca-3,5,9-trien-2-one. It catalyses the reaction lutein + O2 = (3R,6R)-hydroxy-alpha-ionone + (3R)-3-hydroxy-10'-apo-beta-carotenal. It carries out the reaction lutein + O2 = (3R,6R)-3-hydroxy-10'-apo-alpha-carotenal + (3R)-hydroxy-beta-ionone. The enzyme catalyses all-trans-zeaxanthin + 2 O2 = 4,9-dimethyldodeca-2,4,6,8,10-pentaenedial + 2 (3R)-hydroxy-beta-ionone. The catalysed reaction is all-trans-zeaxanthin + O2 = (3R)-3-hydroxy-10'-apo-beta-carotenal + (3R)-hydroxy-beta-ionone. It catalyses the reaction beta-cryptoxanthin + O2 = all-trans-10'-apo-beta-carotenal + (3R)-hydroxy-beta-ionone. It carries out the reaction all-trans-10'-apo-beta-carotenal + O2 = beta-ionone + 4,9-dimethyldodeca-2,4,6,8,10-pentaenedial. The enzyme catalyses (3R)-3-hydroxy-10'-apo-beta-carotenal + O2 = 4,9-dimethyldodeca-2,4,6,8,10-pentaenedial + (3R)-hydroxy-beta-ionone. The catalysed reaction is (3R,6R)-3-hydroxy-10'-apo-alpha-carotenal + O2 = (3R,6R)-hydroxy-alpha-ionone + 4,9-dimethyldodeca-2,4,6,8,10-pentaenedial. In terms of biological role, broad specificity mitochondrial dioxygenase that mediates the asymmetric oxidative cleavage of carotenoids. Cleaves carotenes (pure hydrocarbon carotenoids) such as all-trans-beta-carotene and lycopene as well as xanthophylls (oxygenated carotenoids) such as zeaxanthin, lutein and beta-cryptoxanthin at both the 9,10 and the 9',10' carbon-carbon double bond. Through its function in carotenoids metabolism regulates oxidative stress and the production of important signaling molecules. The polypeptide is Carotenoid-cleaving dioxygenase, mitochondrial (Homo sapiens (Human)).